The sequence spans 326 residues: Probable cell division protein WhiA (326 aa).

Residues 275 to 308 constitute a DNA-binding region (H-T-H motif); sequence SLDELGRLADPPMTKDAIAGRIRRLLAMADKRAS.

It belongs to the WhiA family.

Involved in cell division and chromosome segregation. This Renibacterium salmoninarum (strain ATCC 33209 / DSM 20767 / JCM 11484 / NBRC 15589 / NCIMB 2235) protein is Probable cell division protein WhiA.